Consider the following 431-residue polypeptide: Adenylosuccinate synthetase (431 aa).

GTP contacts are provided by residues 12–18 and 40–42; these read GDEGKGK and GHT. Aspartate 13 functions as the Proton acceptor in the catalytic mechanism. Mg(2+) contacts are provided by aspartate 13 and glycine 40. Residues 13–16, 38–41, threonine 129, arginine 143, glutamine 224, threonine 239, and arginine 303 each bind IMP; these read DEGK and NAGH. Catalysis depends on histidine 41, which acts as the Proton donor. Residue 299–305 participates in substrate binding; sequence VTTGRAR. Residues arginine 305, 331 to 333, and 413 to 415 contribute to the GTP site; these read KLD and GVG.

It belongs to the adenylosuccinate synthetase family. As to quaternary structure, homodimer. Mg(2+) serves as cofactor.

The protein localises to the cytoplasm. It carries out the reaction IMP + L-aspartate + GTP = N(6)-(1,2-dicarboxyethyl)-AMP + GDP + phosphate + 2 H(+). It functions in the pathway purine metabolism; AMP biosynthesis via de novo pathway; AMP from IMP: step 1/2. Its function is as follows. Plays an important role in the de novo pathway of purine nucleotide biosynthesis. Catalyzes the first committed step in the biosynthesis of AMP from IMP. The sequence is that of Adenylosuccinate synthetase from Mycolicibacterium vanbaalenii (strain DSM 7251 / JCM 13017 / BCRC 16820 / KCTC 9966 / NRRL B-24157 / PYR-1) (Mycobacterium vanbaalenii).